The sequence spans 229 residues: tRNA (guanine-N(7)-)-methyltransferase (229 aa).

Residues Glu59, Glu84, Asp111, and Asp134 each coordinate S-adenosyl-L-methionine. The active site involves Asp134. Residues Lys138, Asp170, and 205–208 (TKFE) contribute to the substrate site.

The protein belongs to the class I-like SAM-binding methyltransferase superfamily. TrmB family.

The catalysed reaction is guanosine(46) in tRNA + S-adenosyl-L-methionine = N(7)-methylguanosine(46) in tRNA + S-adenosyl-L-homocysteine. The protein operates within tRNA modification; N(7)-methylguanine-tRNA biosynthesis. Its function is as follows. Catalyzes the formation of N(7)-methylguanine at position 46 (m7G46) in tRNA. The protein is tRNA (guanine-N(7)-)-methyltransferase of Nitrosospira multiformis (strain ATCC 25196 / NCIMB 11849 / C 71).